We begin with the raw amino-acid sequence, 64 residues long: Large ribosomal subunit protein uL29 (64 aa).

It belongs to the universal ribosomal protein uL29 family.

The sequence is that of Large ribosomal subunit protein uL29 from Porphyromonas gingivalis (strain ATCC 33277 / DSM 20709 / CIP 103683 / JCM 12257 / NCTC 11834 / 2561).